The chain runs to 690 residues: Protein-glutamine gamma-glutamyltransferase 2 (690 aa).

An N-acetylalanine modification is found at A2. 2 cysteine pairs are disulfide-bonded: C230/C370 and C370/C371. Catalysis depends on residues C277, H335, and D358. N398, D400, E436, E446, and E451 together coordinate Ca(2+). The residue at position 467 (K467) is an N6-acetyllysine. 479-486 (RIRVGQNM) is a binding site for GTP. Residue E542 participates in Ca(2+) binding. Position 583-586 (583-586 (RDIY)) interacts with GTP. Residue Q636 forms an Isoglutamyl lysine isopeptide (Gln-Lys) (interchain with K-?) linkage.

Belongs to the transglutaminase superfamily. Transglutaminase family. As to quaternary structure, monomer. Interacts with phospholipase C; promoting alpha-1 adrenergic receptor signaling. Interacts with PLCD1. It depends on Ca(2+) as a cofactor. Disulfide bond formation inactivates the calcium-dependent acyltransferase activity. Cys-370 can form disulfide bonds with both Cys-230 and Cys-371: formation of a disulfide bond between Cys-230 and Cys-370 facilitates formation of the disulfide between Cys-370 and Cys-371, which promotes inactivation of the acyltransferase activity. May also form interchain disulfids between Cys-230 and Cys-370. Ca(2+) protects against disulfide bond formation and inactivation. Post-translationally, auto-transglutaminated: Forms covalent cross-links mediated by transglutaminase between Gln-636 and the epsilon-amino group of a lysine residue of itself or HMGB1, forming homopolymers and heteropolymers, respectively. In terms of processing, S-nitrosylated, leading to inactivation of the acyltransferase activity.

The protein resides in the cytoplasm. Its subcellular location is the cytosol. It is found in the nucleus. It localises to the chromosome. The protein localises to the secreted. The protein resides in the extracellular space. Its subcellular location is the extracellular matrix. It is found in the cell membrane. It localises to the mitochondrion. The catalysed reaction is L-glutaminyl-[protein] + L-lysyl-[protein] = [protein]-L-lysyl-N(6)-5-L-glutamyl-[protein] + NH4(+). The enzyme catalyses L-glutaminyl-[protein] + serotonin = 5-serotonyl-L-glutamyl-[protein] + NH4(+). It carries out the reaction L-glutaminyl-[protein] + dopamine = 5-dopaminyl-L-glutamyl-[protein] + NH4(+). It catalyses the reaction L-glutaminyl-[protein] + histamine = 5-histaminyl-L-glutamyl-[protein] + NH4(+). The catalysed reaction is L-glutaminyl-[protein] + (R)-noradrenaline = 5-(R)-noradrenalinyl-L-glutamyl-[protein] + NH4(+). The enzyme catalyses L-glutaminyl-[protein] + H2O = L-glutamyl-[protein] + NH4(+). With respect to regulation, acyltransferase activity is regulated by the binding of GTP and Ca(2+): inactivated by GTP, which stabilizes its closed structure, thereby obstructing the accessibility of substrates to the active sites. In contrast, Ca(2+) acts as a cofactor by inducing conformational change to the active open form. In absence of Ca(2+), Mg(2+) may bind Ca(2+)-binding sites, promoting GTP-binding and subsequent inhibition of the acyltransferase activity. Extracellularly reduced and activated by CLIC3. Functionally, calcium-dependent acyltransferase that catalyzes the formation of covalent bonds between peptide-bound glutamine and various primary amines, such as gamma-amino group of peptide-bound lysine, or mono- and polyamines, thereby producing cross-linked or aminated proteins, respectively. Involved in many biological processes, such as bone development, angiogenesis, wound healing, cellular differentiation, chromatin modification and apoptosis. Acts as a protein-glutamine gamma-glutamyltransferase by mediating the cross-linking of proteins, such as ACO2, HSPB6, FN1, HMGB1, RAP1GDS1, SLC25A4/ANT1, SPP1 and WDR54. Under physiological conditions, the protein cross-linking activity is inhibited by GTP; inhibition is relieved by Ca(2+) in response to various stresses. When secreted, catalyzes cross-linking of proteins of the extracellular matrix, such as FN1 and SPP1 resulting in the formation of scaffolds. Plays a key role during apoptosis, both by (1) promoting the cross-linking of cytoskeletal proteins resulting in condensation of the cytoplasm, and by (2) mediating cross-linking proteins of the extracellular matrix, resulting in the irreversible formation of scaffolds that stabilize the integrity of the dying cells before their clearance by phagocytosis, thereby preventing the leakage of harmful intracellular components. In addition to protein cross-linking, can use different monoamine substrates to catalyze a vast array of protein post-translational modifications: mediates aminylation of serotonin, dopamine, noradrenaline or histamine into glutamine residues of target proteins to generate protein serotonylation, dopaminylation, noradrenalinylation or histaminylation, respectively. Mediates protein serotonylation of small GTPases during activation and aggregation of platelets, leading to constitutive activation of these GTPases. Plays a key role in chromatin organization by mediating serotonylation and dopaminylation of histone H3. Catalyzes serotonylation of 'Gln-5' of histone H3 (H3Q5ser) during serotonergic neuron differentiation, thereby facilitating transcription. Acts as a mediator of neurotransmission-independent role of nuclear dopamine in ventral tegmental area (VTA) neurons: catalyzes dopaminylation of 'Gln-5' of histone H3 (H3Q5dop), thereby regulating relapse-related transcriptional plasticity in the reward system. Regulates vein remodeling by mediating serotonylation and subsequent inactivation of ATP2A2/SERCA2. Also acts as a protein deamidase by mediating the side chain deamidation of specific glutamine residues of proteins to glutamate. Catalyzes specific deamidation of protein gliadin, a component of wheat gluten in the diet. May also act as an isopeptidase cleaving the previously formed cross-links. Also able to participate in signaling pathways independently of its acyltransferase activity: acts as a signal transducer in alpha-1 adrenergic receptor-mediated stimulation of phospholipase C-delta (PLCD) activity and is required for coupling alpha-1 adrenergic agonists to the stimulation of phosphoinositide lipid metabolism. The polypeptide is Protein-glutamine gamma-glutamyltransferase 2 (Cavia cutleri (Guinea pig)).